The chain runs to 178 residues: Crossover junction endodeoxyribonuclease RuvC (178 aa).

Residues aspartate 20, glutamate 80, and aspartate 154 contribute to the active site. Aspartate 20, glutamate 80, and aspartate 154 together coordinate Mg(2+).

It belongs to the RuvC family. As to quaternary structure, homodimer which binds Holliday junction (HJ) DNA. The HJ becomes 2-fold symmetrical on binding to RuvC with unstacked arms; it has a different conformation from HJ DNA in complex with RuvA. In the full resolvosome a probable DNA-RuvA(4)-RuvB(12)-RuvC(2) complex forms which resolves the HJ. It depends on Mg(2+) as a cofactor.

It localises to the cytoplasm. The catalysed reaction is Endonucleolytic cleavage at a junction such as a reciprocal single-stranded crossover between two homologous DNA duplexes (Holliday junction).. Functionally, the RuvA-RuvB-RuvC complex processes Holliday junction (HJ) DNA during genetic recombination and DNA repair. Endonuclease that resolves HJ intermediates. Cleaves cruciform DNA by making single-stranded nicks across the HJ at symmetrical positions within the homologous arms, yielding a 5'-phosphate and a 3'-hydroxyl group; requires a central core of homology in the junction. The consensus cleavage sequence is 5'-(A/T)TT(C/G)-3'. Cleavage occurs on the 3'-side of the TT dinucleotide at the point of strand exchange. HJ branch migration catalyzed by RuvA-RuvB allows RuvC to scan DNA until it finds its consensus sequence, where it cleaves and resolves the cruciform DNA. The protein is Crossover junction endodeoxyribonuclease RuvC of Rhodopirellula baltica (strain DSM 10527 / NCIMB 13988 / SH1).